The following is a 207-amino-acid chain: NADH-quinone oxidoreductase subunit C (207 aa).

It belongs to the complex I 30 kDa subunit family. In terms of assembly, NDH-1 is composed of 14 different subunits. Subunits NuoB, C, D, E, F, and G constitute the peripheral sector of the complex.

Its subcellular location is the cell inner membrane. The enzyme catalyses a quinone + NADH + 5 H(+)(in) = a quinol + NAD(+) + 4 H(+)(out). In terms of biological role, NDH-1 shuttles electrons from NADH, via FMN and iron-sulfur (Fe-S) centers, to quinones in the respiratory chain. The immediate electron acceptor for the enzyme in this species is believed to be ubiquinone. Couples the redox reaction to proton translocation (for every two electrons transferred, four hydrogen ions are translocated across the cytoplasmic membrane), and thus conserves the redox energy in a proton gradient. The polypeptide is NADH-quinone oxidoreductase subunit C (Rickettsia felis (strain ATCC VR-1525 / URRWXCal2) (Rickettsia azadi)).